A 630-amino-acid chain; its full sequence is Cytochrome B pre-mRNA-processing protein 2 (630 aa).

The protein localises to the mitochondrion. Appears to be specifically required for the splicing of the terminal intron (bI5) of the cytochrome b pre-mRNA. Can also stimulates the splicing of the omega intron of the precursor of large ribosomal RNA. The chain is Cytochrome B pre-mRNA-processing protein 2 (CBP2) from Saccharomyces cerevisiae (strain ATCC 204508 / S288c) (Baker's yeast).